A 271-amino-acid polypeptide reads, in one-letter code: HTH-type transcriptional repressor AllR (271 aa).

The HTH iclR-type domain maps to 21–83 (AQALERGIAI…SQLGWWHIGL (63 aa)). Residues 43–62 (VSDISLNLDLPLSTTFRLLK) constitute a DNA-binding region (H-T-H motif). The 170-residue stretch at 98 to 267 (VLSVAGPFMR…ARDISTALGL (170 aa)) folds into the IclR-ED domain. Residues 154-156 (SGA), aspartate 207, cysteine 217, and 234-236 (SIS) each bind glyoxylate.

Its function is as follows. Negative regulator of allantoin and glyoxylate utilization operons. Binds to the gcl promoter and to the allS-allA intergenic region. In Escherichia coli O6:H1 (strain CFT073 / ATCC 700928 / UPEC), this protein is HTH-type transcriptional repressor AllR (allR).